The chain runs to 96 residues: Protein RnfH (96 aa).

This sequence belongs to the UPF0125 (RnfH) family.

In Escherichia coli O81 (strain ED1a), this protein is Protein RnfH.